A 932-amino-acid polypeptide reads, in one-letter code: Protocadherin gamma-A12 (932 aa).

The N-terminal stretch at 1-29 (MIPARLHRDYKGLVLLGILLGTLWETGCT) is a signal peptide. Cadherin domains are found at residues 30-133 (QIRY…APYF), 134-242 (RESE…APAF), 243-347 (AQPE…APEV), 348-452 (VLTS…PPVF), 453-562 (PQAS…APEI), and 570-683 (DGST…SPAN). The Extracellular portion of the chain corresponds to 30 to 692 (QIRYSVPEEL…NSETSDLTLY (663 aa)). Residues N265, N419, and N545 are each glycosylated (N-linked (GlcNAc...) asparagine). Residues 693–713 (LVVAVAAVSCVFLAFVILLLA) form a helical membrane-spanning segment. At 714-932 (LRLRRWHKSR…KKKSGKKEKK (219 aa)) the chain is on the cytoplasmic side. Disordered regions lie at residues 803 to 841 (GHGL…WPNN) and 902 to 932 (ATLT…KEKK). The span at 816 to 841 (WRFSQAQRPGTSGSQNGDDTGTWPNN) shows a compositional bias: polar residues. Basic residues predominate over residues 922–932 (NKKKSGKKEKK).

It is found in the cell membrane. Potential calcium-dependent cell-adhesion protein. May be involved in the establishment and maintenance of specific neuronal connections in the brain. This is Protocadherin gamma-A12 (PCDHGA12) from Pan troglodytes (Chimpanzee).